The chain runs to 168 residues: Auxin-responsive protein IAA1 (168 aa).

Residues 1 to 74 (MEVTNGLNLK…NRKNNNNKNV (74 aa)) are disordered. Positions 14-18 (LRLGL) match the EAR-like (transcriptional repression) motif. Positions 23–34 (EEQQLELSCVRS) are enriched in polar residues. One can recognise a PB1 domain in the interval 74–161 (VSYVKVSMDG…SCQKLRIMKG (88 aa)).

The protein belongs to the Aux/IAA family. In terms of assembly, homodimers and heterodimers. Interacts with the auxin-responsive protein IAA2. Interacts with TPL. Phosphorylated by phytochrome A in vitro. Preferentially expressed in stems, leaves and flowers.

It is found in the nucleus. Functionally, aux/IAA proteins are short-lived transcriptional factors that function as repressors of early auxin response genes at low auxin concentrations. Repression is thought to result from the interaction with auxin response factors (ARFs), proteins that bind to the auxin-responsive promoter element (AuxRE). Formation of heterodimers with ARF proteins may alter their ability to modulate early auxin response genes expression. The chain is Auxin-responsive protein IAA1 (IAA1) from Arabidopsis thaliana (Mouse-ear cress).